Reading from the N-terminus, the 930-residue chain is Isoleucine--tRNA ligase (930 aa).

The 'HIGH' region motif lies at 57-67; that stretch reads PYANGNIHVGH. E554 contacts L-isoleucyl-5'-AMP. Positions 595–599 match the 'KMSKS' region motif; it reads KMSKS. An ATP-binding site is contributed by K598. Residues C888, C891, C908, and C911 each coordinate Zn(2+).

This sequence belongs to the class-I aminoacyl-tRNA synthetase family. IleS type 1 subfamily. As to quaternary structure, monomer. It depends on Zn(2+) as a cofactor.

It localises to the cytoplasm. The enzyme catalyses tRNA(Ile) + L-isoleucine + ATP = L-isoleucyl-tRNA(Ile) + AMP + diphosphate. Functionally, catalyzes the attachment of isoleucine to tRNA(Ile). As IleRS can inadvertently accommodate and process structurally similar amino acids such as valine, to avoid such errors it has two additional distinct tRNA(Ile)-dependent editing activities. One activity is designated as 'pretransfer' editing and involves the hydrolysis of activated Val-AMP. The other activity is designated 'posttransfer' editing and involves deacylation of mischarged Val-tRNA(Ile). The sequence is that of Isoleucine--tRNA ligase from Streptococcus pneumoniae (strain Hungary19A-6).